A 1578-amino-acid chain; its full sequence is MSFTLHSVFFTLKVSSFLGSLVGLCLGLEFMGLPNQWARYLRWDASTRSDLSFQFKTNVSTGLLLYLDDGGVCDFLCLSLVDGRVQLRFSMDCAETTVLSNKQVNDSSWHFLMVSRDRVRTGLVIDGEGQSGELRAQRPYMDVVSDLFLGGGPADIRPSALTLDGVQNMPGFKGLMLDLKYGNSEPRLLGSQSVQLEAEGPCGERPCENGGICFLLDGHPTCDCSTTGYGGTLCSEDVSQGPGLSHLMMSEQGRSKAREENVATFRGSEYLSYDLSQNPIQSSSSEITLSFKTWQRNGLILHTGKSADYVNLALKDGAVSLVINLGSGAFEAIVEPVNGKFNDNAWHDVKVTRNLRQVTISVDGILTTTGYTQEDYTMLGSDDSSYVGPSPSTADLPGSPVSNNFMGCLKEVVYKNNDIRLELSRLARIGATKMKIYGEVVFKCENVATLDPINFETPEAYISLPKWNTKRMGSISFDFRTTEPNGLILLTHGKPQERKDVRSQKNTKVDFFAVELLDGNLYLLLDMGSGTIKVKATQKKANDGEWYHVDIQRDGRSGTISVNSRRTPFTASGQSEILDLEGDMYLGGLPENRAGLILPTELWTAMLNYGYVGCIRDLFIDGRSKNIRQLAEMQNAAGVKSSCSRMSAKQCDSYPCKNNAVCKDGWNRFICDCTGTGYWGRTCEREASILSYDGSMYMKVIMPMVMHTEAEDVSFRFMSQRAYGLLVATTSRDSADTLRLELDGGRVKLMVNLDCIRINCNSSKGPETLYAGQKLNDNEWHTVRVVRRGKSLKLTVDDDVAEGTMVGDHTRLEFHNIETGIMTEKRYISVVPSSFIGHLQSLMFNGLLYIDLCKNGDIDYCELKARFGLRNIIADPVTFKTKSSYLTLATLQAYTSMHLFFQFKTTSADGFILFNSGDGNNFIAVELVKGYIHYVFDLGNGPNVIKGNSDRPLNDNQWHNVVITRDNSNTHSLKVDTKVVTQVINGAKNLDLKGDLYMAGLAQGMYSNLPKLVASRDGFQGCLASVDLNGRLPDLINDALHRSGQIDRGCEGPSTTCQEDSCANQGVCMQQWEGFTCDCSMTSYSGNQCNDPGATYIFGKSGGLILYTWPANDRPSTRSDRLAVGFSTTVKDGVLVRIDSAPGLGDFLQLHIEQGKIGVVFNIGTVDISIKEERTPVNDGKYHVVRFTRNGANATLQVDNWPVNEHYPTGNTDNERRQMVKQKIPFKYNRPVEEWLQEKGRQLTIFNTQAQIAIGGKDKGRLFQGQLSGLYYDGLKVLNMAAENNPNIKINGSVRLVGEVPSVSGTTHTTSMPPEMSTTVMETTTTMATTTTRKNRSTASIQPTSDDLVSSAECSSDDEDFVECEPSTGRSDKSLSTSIFEGGYKAHAPKWESKDFRPNKVSETSRTTTTSLSPELIRFTASSSSGMVPKLPAGKMNNRDLKPQPDIVLLPLPTAYELDSTKLKSPLITCPMFRNVPTANPTEPGIRRVPGASEVIRESNSTTGMVVGIVAAAALCILILLYAMYKYRNRDEGSYQVDETRNYISNSAQSNGTLMKEKQASSKSGHKKQKNKDKEYYV.

The N-terminal stretch at 1–27 is a signal peptide; it reads MSFTLHSVFFTLKVSSFLGSLVGLCLG. The region spanning 28 to 202 is the Laminin G-like 1 domain; the sequence is LEFMGLPNQW…SVQLEAEGPC (175 aa). The Extracellular portion of the chain corresponds to 28-1503; it reads LEFMGLPNQW…EVIRESNSTT (1476 aa). N-linked (GlcNAc...) asparagine glycans are attached at residues Asn58 and Asn105. Residues 198 to 235 form the EGF-like 1 domain; it reads AEGPCGERPCENGGICFLLDGHPTCDCSTTGYGGTLCS. Disulfide bonds link Cys202–Cys213, Cys207–Cys222, and Cys224–Cys234. 2 consecutive Laminin G-like domains span residues 260-444 and 451-643; these read ENVA…VFKC and DPIN…KSSC. 3 residues coordinate Ca(2+): Asp308, Leu325, and Met378. 5 disulfide bridges follow: Cys408–Cys444, Cys614–Cys643, Cys651–Cys662, Cys656–Cys671, and Cys673–Cys683. The EGF-like 2 domain maps to 647–684; it reads SAKQCDSYPCKNNAVCKDGWNRFICDCTGTGYWGRTCE. 2 consecutive Laminin G-like domains span residues 689-861 and 875-1050; these read ILSY…IDYC and DPVT…DRGC. Residues Asp736 and Leu753 each contribute to the Ca(2+) site. An N-linked (GlcNAc...) asparagine glycan is attached at Asn761. Ca(2+) is bound at residue Arg811. Disulfide bonds link Cys1022-Cys1050, Cys1057-Cys1068, Cys1062-Cys1077, and Cys1079-Cys1089. The 38-residue stretch at 1053 to 1090 folds into the EGF-like 3 domain; that stretch reads PSTTCQEDSCANQGVCMQQWEGFTCDCSMTSYSGNQCN. Positions 1094-1294 constitute a Laminin G-like 6 domain; sequence ATYIFGKSGG…NPNIKINGSV (201 aa). Positions 1146 and 1163 each coordinate Ca(2+). N-linked (GlcNAc...) asparagine glycosylation is present at Asn1193. Residues Ile1245 and Asn1247 each contribute to the Ca(2+) site. 2 N-linked (GlcNAc...) asparagine glycosylation sites follow: Asn1291 and Asn1335. Residues 1328–1352 are disordered; sequence ATTTTRKNRSTASIQPTSDDLVSSA. Residues 1337–1352 are compositionally biased toward polar residues; that stretch reads STASIQPTSDDLVSSA. A glycan (O-linked (Xyl...) (heparan sulfate) serine) is linked at Ser1351. Asn1500 carries an N-linked (GlcNAc...) asparagine glycan. A helical membrane pass occupies residues 1504–1524; that stretch reads GMVVGIVAAAALCILILLYAM. The Cytoplasmic segment spans residues 1525-1578; sequence YKYRNRDEGSYQVDETRNYISNSAQSNGTLMKEKQASSKSGHKKQKNKDKEYYV. The disordered stretch occupies residues 1546–1578; it reads NSAQSNGTLMKEKQASSKSGHKKQKNKDKEYYV.

It belongs to the neurexin family. In terms of assembly, the laminin G-like domain 2 binds to NXPH1. Isoform 8/alpha-4B binds to alpha-dystroglycan. The cytoplasmic C-terminal region binds to CASK. Specific isoforms bind neuroligins NLGN1, NLGN2 and NLGN3. Interacts with CLSTN3. Post-translationally, O-glycosylated; contains heparan sulfate. Heparan sulfate attachment is required for synapse development by mediating interactions with neuroligins. In terms of tissue distribution, brain.

It localises to the presynaptic cell membrane. Its function is as follows. Neuronal cell surface protein that may be involved in cell recognition and cell adhesion. May mediate intracellular signaling. In Rattus norvegicus (Rat), this protein is Neurexin-3 (Nrxn3).